The primary structure comprises 205 residues: Arginine exporter protein ArgO (205 aa).

A run of 6 helical transmembrane segments spans residues 1 to 21 (MLAVFLQGFALSAAMILPLGP), 37 to 57 (LMVASLCALSDIVLICGGIFG), 68 to 88 (LLALVTWGGVAFLLWYGWGAF), 112 to 132 (VVTMLAVTWLNPHVYLDTFVV), 147 to 167 (WFALGAVSASVVWFFALALLA), and 182 to 202 (IINTLVGVVMWGIALQLAWQG).

The protein belongs to the LysE/ArgO transporter (TC 2.A.75) family.

Its subcellular location is the cell inner membrane. The catalysed reaction is L-arginine(in) = L-arginine(out). Involved in the export of arginine. Important to control the intracellular level of arginine and the correct balance between arginine and lysine. In Serratia proteamaculans (strain 568), this protein is Arginine exporter protein ArgO.